The chain runs to 189 residues: GTPase NRas (189 aa).

A GTP-binding site is contributed by 10–17 (GAGGVGKS). Residues 32–40 (YDPTIEDSY) carry the Effector region motif. Residues 57 to 61 (DTAGQ) and 116 to 119 (NKCD) each bind GTP. The hypervariable region stretch occupies residues 166-185 (YRMKKLDSSEDNNQGCIRIP). The S-palmitoyl cysteine moiety is linked to residue Cys181. Cys186 carries S-farnesyl cysteine lipidation. A propeptide spans 187 to 189 (KLM) (removed in mature form).

Belongs to the small GTPase superfamily. Ras family. In terms of processing, palmitoylated by the ZDHHC9-GOLGA7 complex. Depalmitoylated by abhd17a, abhd17b and abhd17c. A continuous cycle of de- and re-palmitoylation regulates rapid exchange between plasma membrane and Golgi.

It localises to the cell membrane. The protein localises to the golgi apparatus membrane. It carries out the reaction GTP + H2O = GDP + phosphate + H(+). Alternates between an inactive form bound to GDP and an active form bound to GTP. Activated by a guanine nucleotide-exchange factor (GEF) and inactivated by a GTPase-activating protein (GAP). Functionally, ras proteins bind GDP/GTP and possess intrinsic GTPase activity. In Xenopus laevis (African clawed frog), this protein is GTPase NRas (nras).